A 152-amino-acid polypeptide reads, in one-letter code: Methylglyoxal synthase (152 aa).

In terms of domain architecture, MGS-like spans 1–152 (MELTTRTIAA…YDRYLQQRLK (152 aa)). Residues His19, Lys23, 45–48 (TGTT), and 65–66 (SG) contribute to the substrate site. Asp71 (proton donor/acceptor) is an active-site residue. His98 lines the substrate pocket.

The protein belongs to the methylglyoxal synthase family.

The enzyme catalyses dihydroxyacetone phosphate = methylglyoxal + phosphate. Catalyzes the formation of methylglyoxal from dihydroxyacetone phosphate. This is Methylglyoxal synthase from Yersinia enterocolitica serotype O:8 / biotype 1B (strain NCTC 13174 / 8081).